The chain runs to 503 residues: Maturase K (503 aa).

The protein belongs to the intron maturase 2 family. MatK subfamily.

It localises to the plastid. The protein resides in the chloroplast. Usually encoded in the trnK tRNA gene intron. Probably assists in splicing its own and other chloroplast group II introns. This is Maturase K from Diospyros virginiana (American persimmon).